The following is a 462-amino-acid chain: NAD-capped RNA hydrolase NUDT12 (462 aa).

ANK repeat units lie at residues 11-40, 45-74, and 78-98; these read EIVT…SLLN, NGWT…DRSI, and SRQT…ANLL. An N6-succinyllysine modification is found at lysine 185. Zn(2+)-binding residues include cysteine 284 and cysteine 287. At lysine 292 the chain carries N6-succinyllysine. Zn(2+)-binding residues include cysteine 302 and cysteine 307. Residues tyrosine 318, 354–356, glutamate 370, glutamate 374, and glutamate 415 each bind substrate; that span reads AGF. Residues 319-453 enclose the Nudix hydrolase domain; that stretch reads PRVDPVVIMQ…SRAIAHQLIK (135 aa). Mg(2+)-binding residues include alanine 354, glutamate 370, glutamate 374, and glutamate 415. The Nudix box motif lies at 355-376; that stretch reads GFIEPGETIEDAVRREVEEESG. The Microbody targeting signal signature appears at 460–462; sequence PNL.

Belongs to the Nudix hydrolase family. NudC subfamily. Homodimer. Homodimerization is essential for its catalytic activity and protein stability. Interacts (via ANK repeats) with BLMH. Requires Mg(2+) as cofactor. The cofactor is Zn(2+).

The protein resides in the cytoplasm. The protein localises to the peroxisome. It is found in the cytoplasmic granule. It carries out the reaction a 5'-end NAD(+)-phospho-ribonucleoside in mRNA + H2O = a 5'-end phospho-adenosine-phospho-ribonucleoside in mRNA + beta-nicotinamide D-ribonucleotide + 2 H(+). It catalyses the reaction NAD(+) + H2O = beta-nicotinamide D-ribonucleotide + AMP + 2 H(+). The enzyme catalyses NADH + H2O = reduced beta-nicotinamide D-ribonucleotide + AMP + 2 H(+). The catalysed reaction is NADPH + H2O = reduced beta-nicotinamide D-ribonucleotide + adenosine 2',5'-bisphosphate + 2 H(+). MRNA decapping enzyme that specifically removes the nicotinamide adenine dinucleotide (NAD) cap from a subset of mRNAs by hydrolyzing the diphosphate linkage to produce nicotinamide mononucleotide (NMN) and 5' monophosphate mRNA. The NAD-cap is present at the 5'-end of some RNAs; in contrast to the canonical N7 methylguanosine (m7G) cap, the NAD cap promotes mRNA decay. Preferentially acts on NAD-capped transcripts in response to nutrient stress. Also acts on free nicotinamide adenine dinucleotide molecules: hydrolyzes NAD(H) into NMN(H) and AMP, and NADPH into NMNH and 2',5'-ADP. May act to regulate the concentration of peroxisomal nicotinamide nucleotide cofactors required for oxidative metabolism in this organelle. Regulates the levels of circadian clock components PER1, PER2, PER3 and CRY2 in the liver. This Pongo abelii (Sumatran orangutan) protein is NAD-capped RNA hydrolase NUDT12.